Reading from the N-terminus, the 344-residue chain is Heat-inducible transcription repressor HrcA (344 aa).

Belongs to the HrcA family.

Its function is as follows. Negative regulator of class I heat shock genes (grpE-dnaK-dnaJ and groELS operons). Prevents heat-shock induction of these operons. This is Heat-inducible transcription repressor HrcA from Desulforudis audaxviator (strain MP104C).